A 152-amino-acid chain; its full sequence is Ribonuclease H (152 aa).

An RNase H type-1 domain is found at 4-145 (SRSMVEIFSD…CDELARQAIA (142 aa)). Residues Asp-13, Glu-51, Asp-73, and Asp-137 each coordinate Mg(2+).

This sequence belongs to the RNase H family. Monomer. Mg(2+) serves as cofactor.

The protein localises to the cytoplasm. The catalysed reaction is Endonucleolytic cleavage to 5'-phosphomonoester.. Endonuclease that specifically degrades the RNA of RNA-DNA hybrids. In Syntrophotalea carbinolica (strain DSM 2380 / NBRC 103641 / GraBd1) (Pelobacter carbinolicus), this protein is Ribonuclease H.